The chain runs to 426 residues: Probable indole-3-pyruvate monooxygenase YUCCA8 (426 aa).

FAD is bound at residue 29 to 34 (GAGPSG). 199–204 (GCGNSG) is a binding site for NADP(+).

This sequence belongs to the FMO family. FAD serves as cofactor. Expressed in root tips and in hydathodes. Expressed in root vasculature and quiescent center, but not in the meristematic zone of the root tip.

The catalysed reaction is indole-3-pyruvate + NADPH + O2 + H(+) = (indol-3-yl)acetate + CO2 + NADP(+) + H2O. The protein operates within plant hormone metabolism; auxin biosynthesis. Involved in auxin biosynthesis. Belongs to the set of redundant YUCCA genes probably responsible for auxin biosynthesis in roots. This Arabidopsis thaliana (Mouse-ear cress) protein is Probable indole-3-pyruvate monooxygenase YUCCA8 (YUC8).